The following is a 797-amino-acid chain: Inactive dipeptidyl peptidase 10 (797 aa).

The disordered stretch occupies residues 1 to 28 (MKQEQQPTPGARATQSQPADQELGSNSP). The Cytoplasmic segment spans residues 1 to 34 (MKQEQQPTPGARATQSQPADQELGSNSPPQRNWK). The chain crosses the membrane as a helical; Signal-anchor for type II membrane protein span at residues 35–55 (GIAIALLVILVVCSLITMSVI). Residues 56-797 (LLTPDELTNS…VLPQEPEEDE (742 aa)) are Extracellular-facing. Asn-64, Asn-91, Asn-112, and Asn-120 each carry an N-linked (GlcNAc...) asparagine glycan. Phosphotyrosine occurs at positions 139 and 144. Asn-258, Asn-343, Asn-518, and Asn-749 each carry an N-linked (GlcNAc...) asparagine glycan.

This sequence belongs to the peptidase S9B family. DPPIV subfamily. May form oligomers. Interacts with KCND1 and KCND2. N-glycosylation is important for cell surface expression, specially at Asn-258, which is crucial. Detected in brain cortex (at protein level). Expressed in the brain, predominantly by neurons and not by glia.

The protein resides in the cell membrane. Its function is as follows. Promotes cell surface expression of the potassium channel KCND2. Modulates the activity and gating characteristics of the potassium channel KCND2. Has no dipeptidyl aminopeptidase activity. The polypeptide is Inactive dipeptidyl peptidase 10 (Dpp10) (Mus musculus (Mouse)).